The primary structure comprises 155 residues: Small ribosomal subunit protein uS7c (155 aa).

Belongs to the universal ribosomal protein uS7 family. As to quaternary structure, part of the 30S ribosomal subunit.

The protein localises to the plastid. It localises to the chloroplast. Functionally, one of the primary rRNA binding proteins, it binds directly to 16S rRNA where it nucleates assembly of the head domain of the 30S subunit. In Yucca glauca (Soapweed yucca), this protein is Small ribosomal subunit protein uS7c (rps7).